The chain runs to 327 residues: Transaldolase (327 aa).

The active-site Schiff-base intermediate with substrate is the K132.

The protein belongs to the transaldolase family. Type 1 subfamily.

It localises to the cytoplasm. It carries out the reaction D-sedoheptulose 7-phosphate + D-glyceraldehyde 3-phosphate = D-erythrose 4-phosphate + beta-D-fructose 6-phosphate. Its pathway is carbohydrate degradation; pentose phosphate pathway; D-glyceraldehyde 3-phosphate and beta-D-fructose 6-phosphate from D-ribose 5-phosphate and D-xylulose 5-phosphate (non-oxidative stage): step 2/3. Functionally, transaldolase is important for the balance of metabolites in the pentose-phosphate pathway. The protein is Transaldolase of Chlamydia trachomatis serovar D (strain ATCC VR-885 / DSM 19411 / UW-3/Cx).